A 90-amino-acid polypeptide reads, in one-letter code: Probable Fe(2+)-trafficking protein (90 aa).

The protein belongs to the Fe(2+)-trafficking protein family.

Could be a mediator in iron transactions between iron acquisition and iron-requiring processes, such as synthesis and/or repair of Fe-S clusters in biosynthetic enzymes. This chain is Probable Fe(2+)-trafficking protein, found in Vibrio parahaemolyticus serotype O3:K6 (strain RIMD 2210633).